The primary structure comprises 366 residues: tRNA/tmRNA (uracil-C(5))-methyltransferase (366 aa).

S-adenosyl-L-methionine is bound by residues Gln190, Tyr218, Asn223, Glu239, and Asp299. Cys324 functions as the Nucleophile in the catalytic mechanism. Glu358 (proton acceptor) is an active-site residue.

Belongs to the class I-like SAM-binding methyltransferase superfamily. RNA M5U methyltransferase family. TrmA subfamily.

It catalyses the reaction uridine(54) in tRNA + S-adenosyl-L-methionine = 5-methyluridine(54) in tRNA + S-adenosyl-L-homocysteine + H(+). It carries out the reaction uridine(341) in tmRNA + S-adenosyl-L-methionine = 5-methyluridine(341) in tmRNA + S-adenosyl-L-homocysteine + H(+). Dual-specificity methyltransferase that catalyzes the formation of 5-methyluridine at position 54 (m5U54) in all tRNAs, and that of position 341 (m5U341) in tmRNA (transfer-mRNA). This is tRNA/tmRNA (uracil-C(5))-methyltransferase from Salmonella choleraesuis (strain SC-B67).